The primary structure comprises 629 residues: Chaperone protein DnaK (629 aa).

T195 is subject to Phosphothreonine; by autocatalysis. 2 disordered regions span residues 514 to 533 (EAEQ…EKRN) and 543 to 629 (LGQL…KPAE). Over residues 555–590 (DAKDRLKAAADEAEEAVRSDDDSRIERAQKQLEEAM) the composition is skewed to basic and acidic residues. Positions 595–614 (TAAQSGSQNQAGQGAQTQTG) are enriched in low complexity. Over residues 615 to 629 (RQEDDVIDADFKPAE) the composition is skewed to basic and acidic residues.

Belongs to the heat shock protein 70 family.

Acts as a chaperone. In Deinococcus geothermalis (strain DSM 11300 / CIP 105573 / AG-3a), this protein is Chaperone protein DnaK.